The primary structure comprises 197 residues: Proteasome subunit beta 1 (197 aa).

Residues 1 to 6 (MNRKTG) constitute a propeptide, removed in mature form; by autocatalysis. Thr7 acts as the Nucleophile in catalysis.

Belongs to the peptidase T1B family. The 20S proteasome core is composed of 14 alpha and 14 beta subunits that assemble into four stacked heptameric rings, resulting in a barrel-shaped structure. The two inner rings, each composed of seven catalytic beta subunits, are sandwiched by two outer rings, each composed of seven alpha subunits. The catalytic chamber with the active sites is on the inside of the barrel. Has a gated structure, the ends of the cylinder being occluded by the N-termini of the alpha-subunits. Is capped at one or both ends by the proteasome regulatory ATPase, PAN.

It localises to the cytoplasm. It carries out the reaction Cleavage of peptide bonds with very broad specificity.. The formation of the proteasomal ATPase PAN-20S proteasome complex, via the docking of the C-termini of PAN into the intersubunit pockets in the alpha-rings, triggers opening of the gate for substrate entry. Interconversion between the open-gate and close-gate conformations leads to a dynamic regulation of the 20S proteasome proteolysis activity. Its function is as follows. Component of the proteasome core, a large protease complex with broad specificity involved in protein degradation. The chain is Proteasome subunit beta 1 from Pyrococcus horikoshii (strain ATCC 700860 / DSM 12428 / JCM 9974 / NBRC 100139 / OT-3).